We begin with the raw amino-acid sequence, 150 residues long: Globin-5 (150 aa).

One can recognise a Globin domain in the interval 11 to 150; that stretch reads PLSAAEKTKI…MICILLRSAY (140 aa). Heme b contacts are provided by histidine 74 and histidine 106.

This sequence belongs to the globin family. In terms of assembly, monomer at high oxygen tension and high pH and dimeric at low oxygen tension and lower pH.

In Petromyzon marinus (Sea lamprey), this protein is Globin-5.